A 1988-amino-acid chain; its full sequence is Protein Ycf2 (1988 aa).

1337 to 1344 (GSIGTGRS) provides a ligand contact to ATP. Positions 1377 to 1396 (SDDDSDDIDDSGDIDDSDDI) are disordered.

The protein belongs to the Ycf2 family.

The protein resides in the plastid. The protein localises to the chloroplast stroma. Probable ATPase of unknown function. Its presence in a non-photosynthetic plant (Epifagus virginiana) and experiments in tobacco indicate that it has an essential function which is probably not related to photosynthesis. In Cucumis sativus (Cucumber), this protein is Protein Ycf2.